The primary structure comprises 660 residues: Anoctamin-10 (660 aa).

Topologically, residues 1-207 are cytoplasmic; sequence MKVTLSALDT…DSIRGYFGET (207 aa). A helical membrane pass occupies residues 208–228; it reads IALYFGFLEYFTFALIPMAVI. Residues 229–240 lie on the Extracellular side of the membrane; that stretch reads GLPYYLFVWEDY. Residues 241–261 form a helical membrane-spanning segment; the sequence is DKYVIFASFNLIWSTVILELW. Topologically, residues 262 to 316 are cytoplasmic; sequence KRGCANMTYRWGTLLMKRKFEEPRPGFHGVLGINSITGKEEPLYPSYKRQLRIYL. A helical transmembrane segment spans residues 317-337; that stretch reads VSLPFVCLCLYFSLYVMMIYF. Topologically, residues 338–352 are extracellular; sequence DMEVWALGLHENSGS. Residues 353-373 form a helical membrane-spanning segment; it reads EWTSVLLYVPSIIYAIVIEIM. The Cytoplasmic segment spans residues 374-400; that stretch reads NRLYRYAAEFLTSWENHRLESAYQNHL. Residues 401–421 traverse the membrane as a helical segment; it reads ILKVLVFNFLNCFASLFYIAF. Residues 422–500 lie on the Extracellular side of the membrane; sequence VLKDMKLLRQ…YLGTFDDYLE (79 aa). The helical transmembrane segment at 501–521 threads the bilayer; the sequence is LFLQFGYVSLFSCVYPLAAAF. At 522 to 553 the chain is on the cytoplasmic side; sequence AVLNNFTEVNSDALKMCRVFKRPFSEPSANIG. The chain crosses the membrane as a helical span at residues 554–574; the sequence is VWQLAFETMSVISVVTNCALI. The Extracellular segment spans residues 575–590; it reads GMSPQVNAVFPESKAD. A helical transmembrane segment spans residues 591 to 611; that stretch reads LILIVVAVEHALLALKFILAF. At 612–660 the chain is on the cytoplasmic side; that stretch reads AIPDKPRHIQMKLARLEFESLEALKQQQMKLVTENLKEEPMESGKEKAT.

This sequence belongs to the anoctamin family. Highly expressed in the brain. Intermediate levels in the retina and heart and low levels in the placenta, liver, lung, duodenum, kidney, testis and spleen. In brain areas, highest expression in the frontal and occipital cortices and in the cerebellum. Lower expression in the fetal brain than in the adult brain.

It localises to the cell membrane. Functionally, does not exhibit calcium-activated chloride channel (CaCC) activity. Can inhibit the activity of ANO1. The polypeptide is Anoctamin-10 (ANO10) (Homo sapiens (Human)).